The primary structure comprises 554 residues: Chaperonin GroEL (554 aa).

ATP contacts are provided by residues threonine 30 to proline 33, lysine 51, aspartate 87 to threonine 91, glycine 416, and aspartate 503.

This sequence belongs to the chaperonin (HSP60) family. As to quaternary structure, forms a cylinder of 14 subunits composed of two heptameric rings stacked back-to-back. Interacts with the co-chaperonin GroES.

The protein resides in the cytoplasm. The catalysed reaction is ATP + H2O + a folded polypeptide = ADP + phosphate + an unfolded polypeptide.. Together with its co-chaperonin GroES, plays an essential role in assisting protein folding. The GroEL-GroES system forms a nano-cage that allows encapsulation of the non-native substrate proteins and provides a physical environment optimized to promote and accelerate protein folding. The chain is Chaperonin GroEL from Holospora obtusa.